The chain runs to 496 residues: Adenosylhomocysteinase (496 aa).

The substrate site is built by T68, D157, and E219. 220–222 (TTT) contacts NAD(+). Residues K249 and D253 each contribute to the substrate site. Residues N254, 283-288 (GYGDVG), E306, N341, 362-364 (IGH), and N410 contribute to the NAD(+) site.

This sequence belongs to the adenosylhomocysteinase family. The cofactor is NAD(+).

Its subcellular location is the cytoplasm. The catalysed reaction is S-adenosyl-L-homocysteine + H2O = L-homocysteine + adenosine. It participates in amino-acid biosynthesis; L-homocysteine biosynthesis; L-homocysteine from S-adenosyl-L-homocysteine: step 1/1. Its function is as follows. May play a key role in the regulation of the intracellular concentration of adenosylhomocysteine. The sequence is that of Adenosylhomocysteinase from Mycolicibacterium paratuberculosis (strain ATCC BAA-968 / K-10) (Mycobacterium paratuberculosis).